The primary structure comprises 173 residues: Probable chemoreceptor glutamine deamidase CheD (173 aa).

This sequence belongs to the CheD family.

It carries out the reaction L-glutaminyl-[protein] + H2O = L-glutamyl-[protein] + NH4(+). Probably deamidates glutamine residues to glutamate on methyl-accepting chemotaxis receptors (MCPs), playing an important role in chemotaxis. In Haloarcula marismortui (strain ATCC 43049 / DSM 3752 / JCM 8966 / VKM B-1809) (Halobacterium marismortui), this protein is Probable chemoreceptor glutamine deamidase CheD.